Here is a 294-residue protein sequence, read N- to C-terminus: MYB-like transcription factor ODO1 (294 aa).

2 HTH myb-type domains span residues 9–61 (KLGV…TNYL) and 62–116 (RPDL…KKKL). 2 DNA-binding regions (H-T-H motif) span residues 37 to 61 (WRAV…TNYL) and 89 to 112 (WSKI…NTHI). Disordered regions lie at residues 128-152 (PLKK…NGHQ) and 171-191 (TEFD…NSSC).

Restricted to the petals, with the highest expression in the limb, probably in both epidermal and mesophyll cell layers.

It is found in the nucleus. R2R3 MYB-type transcription factor controlling the production of volatile organic compounds (VOCs), including floral volatile benzenoids and phenylpropanoids (FVBP), in flowers of fragrant cultivars (e.g. cv. Mitchell and cv. V26) by regulating the shikimate pathway, via the activation of several genes (e.g. EPSPS, ADT1, PAL1, CFAT and CCoAOMT1). This scent, mostly produced in the evening and night by the petals, attracts the pollinators (e.g. the night-active hawkmoth pollinator Manduca sexta). Promotes the expression of ABCG1 in petals three hours before the onset of volatile scent emission. Anthocyanins production is not controlled by ODO1 as color and scent are produced at different stages of development. Seems to trigger a negative feed-back loop that represses the expression of EOBI. The chain is MYB-like transcription factor ODO1 from Petunia hybrida (Petunia).